A 375-amino-acid polypeptide reads, in one-letter code: Lipid-A-disaccharide synthase (375 aa).

This sequence belongs to the LpxB family.

It carries out the reaction a lipid X + a UDP-2-N,3-O-bis[(3R)-3-hydroxyacyl]-alpha-D-glucosamine = a lipid A disaccharide + UDP + H(+). It participates in bacterial outer membrane biogenesis; LPS lipid A biosynthesis. In terms of biological role, condensation of UDP-2,3-diacylglucosamine and 2,3-diacylglucosamine-1-phosphate to form lipid A disaccharide, a precursor of lipid A, a phosphorylated glycolipid that anchors the lipopolysaccharide to the outer membrane of the cell. This Pseudomonas putida (strain W619) protein is Lipid-A-disaccharide synthase.